Reading from the N-terminus, the 248-residue chain is tRNA (guanine-N(1)-)-methyltransferase (248 aa).

Residues Gly-113 and 133–138 (IGDYVL) each bind S-adenosyl-L-methionine.

The protein belongs to the RNA methyltransferase TrmD family. As to quaternary structure, homodimer.

It localises to the cytoplasm. It catalyses the reaction guanosine(37) in tRNA + S-adenosyl-L-methionine = N(1)-methylguanosine(37) in tRNA + S-adenosyl-L-homocysteine + H(+). Its function is as follows. Specifically methylates guanosine-37 in various tRNAs. The sequence is that of tRNA (guanine-N(1)-)-methyltransferase from Shewanella loihica (strain ATCC BAA-1088 / PV-4).